A 68-amino-acid chain; its full sequence is Large ribosomal subunit protein uL29 (68 aa).

The protein belongs to the universal ribosomal protein uL29 family.

The chain is Large ribosomal subunit protein uL29 from Leuconostoc citreum (strain KM20).